The chain runs to 350 residues: UDP-3-O-acylglucosamine N-acyltransferase (350 aa).

Residue H257 is the Proton acceptor of the active site.

It belongs to the transferase hexapeptide repeat family. LpxD subfamily. As to quaternary structure, homotrimer.

It carries out the reaction a UDP-3-O-[(3R)-3-hydroxyacyl]-alpha-D-glucosamine + a (3R)-hydroxyacyl-[ACP] = a UDP-2-N,3-O-bis[(3R)-3-hydroxyacyl]-alpha-D-glucosamine + holo-[ACP] + H(+). It participates in bacterial outer membrane biogenesis; LPS lipid A biosynthesis. In terms of biological role, catalyzes the N-acylation of UDP-3-O-acylglucosamine using 3-hydroxyacyl-ACP as the acyl donor. Is involved in the biosynthesis of lipid A, a phosphorylated glycolipid that anchors the lipopolysaccharide to the outer membrane of the cell. The sequence is that of UDP-3-O-acylglucosamine N-acyltransferase from Chelativorans sp. (strain BNC1).